We begin with the raw amino-acid sequence, 613 residues long: Threonine--tRNA ligase (613 aa).

An editing domain region spans residues 1–147; the sequence is MRLLLIHARS…TITPQESAPQ (147 aa). Catalytic regions lie at residues 199-495 and 200-495; these read PRYI…PALP and RYID…PALP. Zn(2+) contacts are provided by Cys-292, His-343, and His-464.

The protein belongs to the class-II aminoacyl-tRNA synthetase family. As to quaternary structure, homodimer. Zn(2+) serves as cofactor.

The protein resides in the cytoplasm. It carries out the reaction tRNA(Thr) + L-threonine + ATP = L-threonyl-tRNA(Thr) + AMP + diphosphate + H(+). Functionally, catalyzes the attachment of threonine to tRNA(Thr) in a two-step reaction: L-threonine is first activated by ATP to form Thr-AMP and then transferred to the acceptor end of tRNA(Thr). Also edits incorrectly charged L-seryl-tRNA(Thr). The polypeptide is Threonine--tRNA ligase (Caldivirga maquilingensis (strain ATCC 700844 / DSM 13496 / JCM 10307 / IC-167)).